A 768-amino-acid polypeptide reads, in one-letter code: Degenerin mec-4 (768 aa).

The Cytoplasmic segment spans residues 1–109 (MSWMQNLKNY…GEAPNVYYRA (109 aa)). A helical membrane pass occupies residues 110-130 (VWVMLFLGCMIMLYLNAQSVL). Over 131–718 (DKYNRNEKIV…VNLLADFGGQ (588 aa)) the chain is Extracellular. Disordered stretches follow at residues 187–221 (AGGN…GKRD) and 237–260 (GSQG…ETTT). The span at 189–200 (GNKEHDGEKEVI) shows a compositional bias: basic and acidic residues. Low complexity predominate over residues 203–212 (APTTPAPTTK). Over residues 243–252 (EQEDKDDEKE) the composition is skewed to acidic residues. Asn336, Asn357, Asn480, Asn484, Asn503, and Asn671 each carry an N-linked (GlcNAc...) asparagine glycan. The chain crosses the membrane as a helical span at residues 719–739 (LGLWCGISFLTCCEFVFLFLE). The Cytoplasmic portion of the chain corresponds to 740–768 (TAYMSAEHNYSLYKKKKAEKAKKVASGSF).

This sequence belongs to the amiloride-sensitive sodium channel (TC 1.A.6) family. In terms of assembly, the channel is probably composed of at least the mec-2, mec-4, mec-6 and mec-10 subunits.

Its subcellular location is the membrane. Probable sodium channel subunit. May be needed for mechanosensory transduction (touch sensitivity). Negatively regulates the turning step of male mating behavior. The protein is Degenerin mec-4 (mec-4) of Caenorhabditis briggsae.